The chain runs to 260 residues: 3'-5' ssDNA/RNA exonuclease TatD (260 aa).

The a divalent metal cation site is built by Glu-92, His-128, and His-153.

It belongs to the metallo-dependent hydrolases superfamily. TatD-type hydrolase family. TatD subfamily. In terms of assembly, monomer. Mg(2+) is required as a cofactor.

It is found in the cytoplasm. Its function is as follows. 3'-5' exonuclease that prefers single-stranded DNA and RNA. May play a role in the H(2)O(2)-induced DNA damage repair. This is 3'-5' ssDNA/RNA exonuclease TatD from Pectobacterium carotovorum subsp. carotovorum (strain PC1).